The chain runs to 902 residues: Gamma-tubulin complex component 2 (902 aa).

Y83 is subject to Phosphotyrosine. The interval 874–902 (AERSQKATPQVPVLRGPPAPAPRVAVTAQ) is disordered.

Belongs to the TUBGCP family. In terms of assembly, component of the gamma-tubulin ring complex (gTuRC) consisting of TUBGCP2, TUBGCP3, TUBGCP4, TUBGCP5 and TUBGCP6 and gamma-tubulin TUBG1 or TUBG2. TUBGCP2, TUBGCP3, TUBGCP4, TUBGCP5 and TUBGCP6 assemble in a 5:5:2:1:1 stoichiometry; each is associated with a gamma-tubulin, thereby arranging 14 gamma-tubulins in a helical manner. Gamma-tubulin at the first position is blocked by TUBGCP3 at the last position, allowing 13 protafilaments to grow into a microtubule. The gTuRC (via TUBGCP3 and TUBGCP6) interacts with ACTB and MZT1; the interactions form a luminal bridge that stabilizes the initial structure during complex assembly. The gTuRC (via TUBGCP2) interacts with MZT2A/MZT2B and CDK5RAP2 (via CM1 motif); the interactions play a role in gTuRC activation. Interacts with ATF5; the ATF5:PCNT:polyglutamylated tubulin (PGT) tripartite unites the mother centriole and the pericentriolar material (PCM) in the centrosome. As to expression, ubiquitously expressed.

Its subcellular location is the cytoplasm. It is found in the cytoskeleton. The protein localises to the microtubule organizing center. The protein resides in the centrosome. In terms of biological role, component of the gamma-tubulin ring complex (gTuRC) which mediates microtubule nucleation. The gTuRC regulates the minus-end nucleation of alpha-beta tubulin heterodimers that grow into microtubule protafilaments, a critical step in centrosome duplication and spindle formation. Plays a role in neuronal migration. This is Gamma-tubulin complex component 2 (TUBGCP2) from Homo sapiens (Human).